We begin with the raw amino-acid sequence, 250 residues long: Vacuolar iron transporter 1 (250 aa).

Residues 1-37 (MSSEEDKITRISIEPEKQTLLDHHTEKHFTAGEIVRD) lie on the Cytoplasmic side of the membrane. Residues 38 to 58 (IIIGVSDGLTVPFALAAGLSG) form a helical membrane-spanning segment. The Vacuolar portion of the chain corresponds to 59–64 (ANASSS). Residues 65–85 (IVLTAGIAEVAAGAISMGLGG) form a helical membrane-spanning segment. The Cytoplasmic segment spans residues 86–169 (YLAAKSEEDH…PDPKRALQSA (84 aa)). The tract at residues 91–166 (SEEDHYAREM…LEKPDPKRAL (76 aa)) is cytoplasmic metal binding domain (MBD). Residues Glu-103, Glu-106, Glu-114, Glu-117, Met-150, and Glu-154 each coordinate Fe cation. A helical membrane pass occupies residues 170-190 (FTIAIAYVLGGFIPLLPYMLI). The Vacuolar portion of the chain corresponds to 191-192 (PH). Residues 193 to 213 (AMDAVVASVVITLFALFIFGY) traverse the membrane as a helical segment. The Cytoplasmic portion of the chain corresponds to 214–227 (AKGHFTGSKPLRSA). The helical transmembrane segment at 228–248 (FETAFIGAIASAAAFCLAKVV) threads the bilayer. The Vacuolar segment spans residues 249 to 250 (QH).

Belongs to the CCC1 family. In terms of assembly, homodimer. The dimeric interaction is mediated by both the transmembrane domains (TMDs) and the cytoplasmic metal binding domain (MBD). As to expression, highly expressed in developing embryo and seed. Expressed in young seedlings, predominantly in the vasculature.

The protein resides in the vacuole membrane. It carries out the reaction Fe(2+)(in) = Fe(2+)(out). Its function is as follows. Vacuolar iron transporter involved in the transfer of iron ions from the cytosol to the vacuole for intracellular iron storage. Involved in regulation of cellular iron homeostasis. Vacuolar iron storage is required for seed embryo and seedling development. The polypeptide is Vacuolar iron transporter 1 (Arabidopsis thaliana (Mouse-ear cress)).